A 399-amino-acid polypeptide reads, in one-letter code: Exodeoxyribonuclease 7 large subunit (399 aa).

The protein belongs to the XseA family. As to quaternary structure, heterooligomer composed of large and small subunits.

It is found in the cytoplasm. The catalysed reaction is Exonucleolytic cleavage in either 5'- to 3'- or 3'- to 5'-direction to yield nucleoside 5'-phosphates.. Its function is as follows. Bidirectionally degrades single-stranded DNA into large acid-insoluble oligonucleotides, which are then degraded further into small acid-soluble oligonucleotides. The sequence is that of Exodeoxyribonuclease 7 large subunit from Clostridium botulinum (strain Eklund 17B / Type B).